We begin with the raw amino-acid sequence, 473 residues long: 23S rRNA (uracil(1939)-C(5))-methyltransferase RlmD (473 aa).

The segment at 6-27 (KPSKGKNKSNVKGRVRGAGSGE) is disordered. Residues 8–20 (SKGKNKSNVKGRV) are compositionally biased toward basic residues. One can recognise a TRAM domain in the interval 42 to 99 (DDINAANEAVTIDGMDWQGQGVARGDTLYFVDGALPGETVEIKALSSNKQIVNAKVTK). C112, C118, C121, and C199 together coordinate [4Fe-4S] cluster. Residues Q304, F333, N338, E354, D381, and D402 each coordinate S-adenosyl-L-methionine. C428 functions as the Nucleophile in the catalytic mechanism.

The protein belongs to the class I-like SAM-binding methyltransferase superfamily. RNA M5U methyltransferase family. RlmD subfamily.

The catalysed reaction is uridine(1939) in 23S rRNA + S-adenosyl-L-methionine = 5-methyluridine(1939) in 23S rRNA + S-adenosyl-L-homocysteine + H(+). Functionally, catalyzes the formation of 5-methyl-uridine at position 1939 (m5U1939) in 23S rRNA. The sequence is that of 23S rRNA (uracil(1939)-C(5))-methyltransferase RlmD from Alteromonas naphthalenivorans.